A 166-amino-acid polypeptide reads, in one-letter code: uncharacterized protein (166 aa).

Helical transmembrane passes span Leu-4 to Ile-24, Leu-101 to Ile-121, and Ser-146 to Leu-166.

It is found in the membrane. This is an uncharacterized protein from Saccharomyces cerevisiae (strain ATCC 204508 / S288c) (Baker's yeast).